Reading from the N-terminus, the 216-residue chain is Large ribosomal subunit protein eL15 (216 aa).

It belongs to the eukaryotic ribosomal protein eL15 family.

This Metallosphaera sedula (strain ATCC 51363 / DSM 5348 / JCM 9185 / NBRC 15509 / TH2) protein is Large ribosomal subunit protein eL15.